The chain runs to 403 residues: SH3 and cysteine-rich domain-containing protein (403 aa).

Residues 1–51 form a disordered region; the sequence is MIPPSGAREDSGDGLTGEATGTEQPPSPASTSSLESKLQKLKRSLSFKTKS. The segment covering 19–36 has biased composition (polar residues); it reads ATGTEQPPSPASTSSLES. Basic residues predominate over residues 39–51; it reads QKLKRSLSFKTKS. The Phorbol-ester/DAG-type zinc finger occupies 108 to 160; that stretch reads LHAFQEHVFKKPTFCDVCNHMIVGTHAKHGLRCGACKMSIHHKCADGLAPQRC. A disordered region spans residues 212–264; sequence QRTKKGGSGSGSDSPPRTSTSELVDVPEEADGPGDGSDMRTRSNSVFTYPENG. The segment covering 222 to 232 has biased composition (low complexity); sequence GSDSPPRTSTS. 2 SH3 domains span residues 286-345 and 348-403; these read LQMN…RVEE and KIYR…LVDV.

In terms of assembly, interacts (via SH3 domains) with CACNA1S. Interacts with CACNA1H. Interacts with CACNA1C. Expressed predominantly in brain Detected in brain neurons, more specifically in hippocampus, cerebellum and inferior olive. Highly expressed in urinary bladder, and detected at lower levels in adrenal gland. Detected at very low levels in heart, liver, lung and kidney.

It localises to the cytoplasm. The protein resides in the cytosol. The protein localises to the cell membrane. It is found in the sarcolemma. Promotes expression of the ion channel CACNA1H at the cell membrane, and thereby contributes to the regulation of channel activity. Plays a minor and redundant role in promoting the expression of calcium channel CACNA1S at the cell membrane, and thereby contributes to increased channel activity. Slows the rate of calcium-mediated inactivation of CACNA1C calcium channel activity. This chain is SH3 and cysteine-rich domain-containing protein, found in Mus musculus (Mouse).